The chain runs to 105 residues: Small ribosomal subunit protein uS10 (105 aa).

It belongs to the universal ribosomal protein uS10 family. Part of the 30S ribosomal subunit.

Functionally, involved in the binding of tRNA to the ribosomes. This is Small ribosomal subunit protein uS10 from Desulfotalea psychrophila (strain LSv54 / DSM 12343).